The primary structure comprises 207 residues: Large ribosomal subunit protein uL4 (207 aa).

The disordered stretch occupies residues 45 to 78; that stretch reads RQGTHAVKNRSAVRGGGRKPWRQKGTGRARQGSI. A compositionally biased stretch (basic residues) spans 60–71; it reads GGRKPWRQKGTG.

The protein belongs to the universal ribosomal protein uL4 family. As to quaternary structure, part of the 50S ribosomal subunit.

One of the primary rRNA binding proteins, this protein initially binds near the 5'-end of the 23S rRNA. It is important during the early stages of 50S assembly. It makes multiple contacts with different domains of the 23S rRNA in the assembled 50S subunit and ribosome. Functionally, forms part of the polypeptide exit tunnel. This chain is Large ribosomal subunit protein uL4, found in Pediococcus pentosaceus (strain ATCC 25745 / CCUG 21536 / LMG 10740 / 183-1w).